Consider the following 88-residue polypeptide: UPF0237 protein spr0217 (88 aa).

Residues 4 to 77 enclose the ACT domain; sequence IITVVGKDKS…QTLNVKINIQ (74 aa).

It belongs to the UPF0237 family. In terms of assembly, homodimer.

This chain is UPF0237 protein spr0217, found in Streptococcus pneumoniae (strain ATCC BAA-255 / R6).